The chain runs to 377 residues: Actin-related protein T2 (377 aa).

It belongs to the actin family.

It localises to the cytoplasm. Its subcellular location is the cytoskeleton. In Macaca fascicularis (Crab-eating macaque), this protein is Actin-related protein T2 (ACTRT2).